Consider the following 262-residue polypeptide: 5'-nucleotidase SurE (262 aa).

Residues D11, D12, S43, and N101 each contribute to the a divalent metal cation site.

Belongs to the SurE nucleotidase family. A divalent metal cation serves as cofactor.

It localises to the cytoplasm. It carries out the reaction a ribonucleoside 5'-phosphate + H2O = a ribonucleoside + phosphate. In terms of biological role, nucleotidase that shows phosphatase activity on nucleoside 5'-monophosphates. This is 5'-nucleotidase SurE from Prochlorococcus marinus (strain NATL2A).